The chain runs to 154 residues: UPF0178 protein Gbem_2221 (154 aa).

Belongs to the UPF0178 family.

In Citrifermentans bemidjiense (strain ATCC BAA-1014 / DSM 16622 / JCM 12645 / Bem) (Geobacter bemidjiensis), this protein is UPF0178 protein Gbem_2221.